Here is a 352-residue protein sequence, read N- to C-terminus: Cyclin-dependent kinase-like 1 (352 aa).

The 284-residue stretch at 4 to 287 folds into the Protein kinase domain; sequence YEKIGKIGEG…CEQLLQHPYF (284 aa). Residues 10–18 and Lys33 contribute to the ATP site; that span reads IGEGSYGVV. The [NKR]KIAxRE motif lies at 45 to 51; the sequence is KKIALRE. The active-site Proton acceptor is the Asp126.

It belongs to the protein kinase superfamily. CMGC Ser/Thr protein kinase family. CDC2/CDKX subfamily.

Its subcellular location is the cytoplasm. The protein resides in the nucleus. The enzyme catalyses L-seryl-[protein] + ATP = O-phospho-L-seryl-[protein] + ADP + H(+). It catalyses the reaction L-threonyl-[protein] + ATP = O-phospho-L-threonyl-[protein] + ADP + H(+). This is Cyclin-dependent kinase-like 1 from Mus musculus (Mouse).